An 865-amino-acid polypeptide reads, in one-letter code: TATA box-binding protein-associated factor RNA polymerase I subunit B (865 aa).

An RRN7-type zinc finger spans residues 1-33 (MHSAKNEKCNACGGYRFSVNDGFKYCDRCGALF). Zn(2+) contacts are provided by Cys9, Cys12, Cys26, and Cys29. Residues 35–99 (NFEELEEEEG…DFLQQQAIKG (65 aa)) are B-reader. Positions 100-111 (EELELPHDATPD) are B-linker. The segment at 112-348 (YLYRLALRLF…SQPERMKQGE (237 aa)) is N-terminal cyclin fold. Positions 233–261 (DEDGDQDAQGGQQLDDLTLETTQNPDESI) are disordered. Residues 239 to 248 (DAQGGQQLDD) are compositionally biased toward low complexity. Residues 252–261 (ETTQNPDESI) are compositionally biased toward polar residues. Residues 349-496 (VVKPTIVDYA…LLTLRLTFQL (148 aa)) form a C-terminal cyclin fold region.

The protein belongs to the RRN7/TAF1B family.

The protein localises to the nucleus. It localises to the nucleolus. Functionally, component of RNA polymerase I core factor complex that acts as a GTF2B/TFIIB-like factor and plays a key role in multiple steps during transcription initiation such as pre-initiation complex (PIC) assembly and postpolymerase recruitment events in polymerase I (Pol I) transcription. Binds rDNA promoters and plays a role in Pol I recruitment. The chain is TATA box-binding protein-associated factor RNA polymerase I subunit B from Caenorhabditis elegans.